The following is a 289-amino-acid chain: Cyclo(L-tyrosyl-L-tyrosyl) synthase (289 aa).

The segment at 1–48 is disordered; that stretch reads MSYVAAEPGVLISPTDDLQSPRSAPAAHDENADGITGGTRDDSAPNSR. Ser-88 acts as the Nucleophile in catalysis. Residues Asn-91, 229–233, and Tyr-253 each bind substrate; that span reads YICAE.

Belongs to the CDPS family. As to quaternary structure, homodimer.

The catalysed reaction is 2 L-tyrosyl-tRNA(Tyr) = cyclo(L-tyrosyl-L-tyrosyl) + 2 tRNA(Tyr). Involved in the biosynthesis of mycocyclosin. It uses activated amino acids in the form of aminoacyl-tRNAs (aa-tRNAs) as substrates to catalyze the ATP-independent formation of cyclodipeptides which are intermediates in diketopiperazine (DKP) biosynthetic pathways. Catalyzes the formation of cyclo(L-Tyr-L-Tyr) (cYY) from L-tyrosyl-tRNA(Tyr). This is Cyclo(L-tyrosyl-L-tyrosyl) synthase from Mycobacterium tuberculosis (strain CDC 1551 / Oshkosh).